Here is a 403-residue protein sequence, read N- to C-terminus: Homoserine O-succinyltransferase (403 aa).

Residues 58–366 (NAVLICHALS…ESNHGHDAFL (309 aa)) form the AB hydrolase-1 domain. Ser164 serves as the catalytic Nucleophile. A substrate-binding site is contributed by Arg234. Catalysis depends on residues Asp329 and His362. Asp363 is a binding site for substrate.

It belongs to the AB hydrolase superfamily. MetX family. As to quaternary structure, homodimer.

The protein localises to the cytoplasm. The enzyme catalyses L-homoserine + succinyl-CoA = O-succinyl-L-homoserine + CoA. It participates in amino-acid biosynthesis; L-methionine biosynthesis via de novo pathway; O-succinyl-L-homoserine from L-homoserine: step 1/1. Transfers a succinyl group from succinyl-CoA to L-homoserine, forming succinyl-L-homoserine. In Halothiobacillus neapolitanus (strain ATCC 23641 / c2) (Thiobacillus neapolitanus), this protein is Homoserine O-succinyltransferase.